A 193-amino-acid polypeptide reads, in one-letter code: Peptidyl-tRNA hydrolase (193 aa).

Position 16 (Y16) interacts with tRNA. The active-site Proton acceptor is H21. TRNA-binding residues include F66, N68, and N114.

It belongs to the PTH family. In terms of assembly, monomer.

The protein localises to the cytoplasm. The catalysed reaction is an N-acyl-L-alpha-aminoacyl-tRNA + H2O = an N-acyl-L-amino acid + a tRNA + H(+). Functionally, hydrolyzes ribosome-free peptidyl-tRNAs (with 1 or more amino acids incorporated), which drop off the ribosome during protein synthesis, or as a result of ribosome stalling. Catalyzes the release of premature peptidyl moieties from peptidyl-tRNA molecules trapped in stalled 50S ribosomal subunits, and thus maintains levels of free tRNAs and 50S ribosomes. This Trichlorobacter lovleyi (strain ATCC BAA-1151 / DSM 17278 / SZ) (Geobacter lovleyi) protein is Peptidyl-tRNA hydrolase.